The sequence spans 315 residues: Ribosomal RNA small subunit methyltransferase H (315 aa).

S-adenosyl-L-methionine is bound by residues 35–37 (GGH), aspartate 55, phenylalanine 79, aspartate 101, and glutamine 108.

It belongs to the methyltransferase superfamily. RsmH family.

It localises to the cytoplasm. The catalysed reaction is cytidine(1402) in 16S rRNA + S-adenosyl-L-methionine = N(4)-methylcytidine(1402) in 16S rRNA + S-adenosyl-L-homocysteine + H(+). Functionally, specifically methylates the N4 position of cytidine in position 1402 (C1402) of 16S rRNA. The protein is Ribosomal RNA small subunit methyltransferase H of Sodalis glossinidius (strain morsitans).